Here is a 368-residue protein sequence, read N- to C-terminus: Aspartate-semialdehyde dehydrogenase (368 aa).

NADP(+) contacts are provided by residues 10–13 (RGMV), 37–38 (TS), and Q72. R101 serves as a coordination point for phosphate. Residue C134 is the Acyl-thioester intermediate of the active site. Residues 160–161 (SG) and P191 contribute to the NADP(+) site. E239 contributes to the substrate binding site. K242 contributes to the phosphate binding site. Position 266 (R266) interacts with substrate. H273 (proton acceptor) is an active-site residue. Q349 contacts NADP(+).

The protein belongs to the aspartate-semialdehyde dehydrogenase family. In terms of assembly, homodimer.

It carries out the reaction L-aspartate 4-semialdehyde + phosphate + NADP(+) = 4-phospho-L-aspartate + NADPH + H(+). The protein operates within amino-acid biosynthesis; L-lysine biosynthesis via DAP pathway; (S)-tetrahydrodipicolinate from L-aspartate: step 2/4. Its pathway is amino-acid biosynthesis; L-methionine biosynthesis via de novo pathway; L-homoserine from L-aspartate: step 2/3. It participates in amino-acid biosynthesis; L-threonine biosynthesis; L-threonine from L-aspartate: step 2/5. Functionally, catalyzes the NADPH-dependent formation of L-aspartate-semialdehyde (L-ASA) by the reductive dephosphorylation of L-aspartyl-4-phosphate. In Azotobacter vinelandii, this protein is Aspartate-semialdehyde dehydrogenase.